The following is a 527-amino-acid chain: Pyruvate kinase 2, cytosolic (527 aa).

R58 provides a ligand contact to substrate. K(+) contacts are provided by D60, S62, D92, and T93. 60–63 provides a ligand contact to ATP; sequence DFSW. Residue K256 participates in substrate binding. E258 is a Mg(2+) binding site. Positions 281, 282, and 313 each coordinate substrate. N282 is a binding site for Mg(2+).

The protein belongs to the pyruvate kinase family. As to quaternary structure, homotetramer. Requires Mg(2+) as cofactor. The cofactor is K(+).

The protein resides in the cytoplasm. Its subcellular location is the cytosol. It catalyses the reaction pyruvate + ATP = phosphoenolpyruvate + ADP + H(+). Its pathway is carbohydrate degradation; glycolysis; pyruvate from D-glyceraldehyde 3-phosphate: step 5/5. Key regulatory enzyme of the glycolytic pathway that catalyzes the final step of glycolysis, converting ADP and phosphoenolpyruvate (PEP) to ATP and pyruvate by essentially irreversible transphosphorylation. This is Pyruvate kinase 2, cytosolic from Oryza sativa subsp. indica (Rice).